The sequence spans 348 residues: UDP-3-O-acylglucosamine N-acyltransferase (348 aa).

H241 serves as the catalytic Proton acceptor.

The protein belongs to the transferase hexapeptide repeat family. LpxD subfamily. As to quaternary structure, homotrimer.

It catalyses the reaction a UDP-3-O-[(3R)-3-hydroxyacyl]-alpha-D-glucosamine + a (3R)-hydroxyacyl-[ACP] = a UDP-2-N,3-O-bis[(3R)-3-hydroxyacyl]-alpha-D-glucosamine + holo-[ACP] + H(+). The protein operates within bacterial outer membrane biogenesis; LPS lipid A biosynthesis. Catalyzes the N-acylation of UDP-3-O-acylglucosamine using 3-hydroxyacyl-ACP as the acyl donor. Is involved in the biosynthesis of lipid A, a phosphorylated glycolipid that anchors the lipopolysaccharide to the outer membrane of the cell. The protein is UDP-3-O-acylglucosamine N-acyltransferase of Neisseria meningitidis serogroup C / serotype 2a (strain ATCC 700532 / DSM 15464 / FAM18).